Here is a 247-residue protein sequence, read N- to C-terminus: Exosome complex component Rrp4 (247 aa).

One can recognise an S1 motif domain in the interval 70-143 (GDTVIGLIED…INPILSIKGK (74 aa)). The KH domain occupies 149 to 211 (SSGIVIDIPP…EALVEAIQII (63 aa)).

It belongs to the RRP4 family. In terms of assembly, component of the archaeal exosome complex. Forms a trimer of Rrp4 and/or Csl4 subunits. The trimer associates with a hexameric ring-like arrangement composed of 3 Rrp41-Rrp42 heterodimers.

It is found in the cytoplasm. Functionally, non-catalytic component of the exosome, which is a complex involved in RNA degradation. Increases the RNA binding and the efficiency of RNA degradation. Confers strong poly(A) specificity to the exosome. The chain is Exosome complex component Rrp4 from Sulfurisphaera tokodaii (strain DSM 16993 / JCM 10545 / NBRC 100140 / 7) (Sulfolobus tokodaii).